The sequence spans 262 residues: Phosphatidylserine decarboxylase proenzyme (262 aa).

Residues Asp86, His142, and Ser226 each act as charge relay system; for autoendoproteolytic cleavage activity in the active site. Ser226 functions as the Schiff-base intermediate with substrate; via pyruvic acid; for decarboxylase activity in the catalytic mechanism. Ser226 is subject to Pyruvic acid (Ser); by autocatalysis.

Belongs to the phosphatidylserine decarboxylase family. PSD-B subfamily. Prokaryotic type I sub-subfamily. In terms of assembly, heterodimer of a large membrane-associated beta subunit and a small pyruvoyl-containing alpha subunit. Pyruvate serves as cofactor. Post-translationally, is synthesized initially as an inactive proenzyme. Formation of the active enzyme involves a self-maturation process in which the active site pyruvoyl group is generated from an internal serine residue via an autocatalytic post-translational modification. Two non-identical subunits are generated from the proenzyme in this reaction, and the pyruvate is formed at the N-terminus of the alpha chain, which is derived from the carboxyl end of the proenzyme. The autoendoproteolytic cleavage occurs by a canonical serine protease mechanism, in which the side chain hydroxyl group of the serine supplies its oxygen atom to form the C-terminus of the beta chain, while the remainder of the serine residue undergoes an oxidative deamination to produce ammonia and the pyruvoyl prosthetic group on the alpha chain. During this reaction, the Ser that is part of the protease active site of the proenzyme becomes the pyruvoyl prosthetic group, which constitutes an essential element of the active site of the mature decarboxylase.

It is found in the cell membrane. The catalysed reaction is a 1,2-diacyl-sn-glycero-3-phospho-L-serine + H(+) = a 1,2-diacyl-sn-glycero-3-phosphoethanolamine + CO2. It functions in the pathway phospholipid metabolism; phosphatidylethanolamine biosynthesis; phosphatidylethanolamine from CDP-diacylglycerol: step 2/2. Functionally, catalyzes the formation of phosphatidylethanolamine (PtdEtn) from phosphatidylserine (PtdSer). The chain is Phosphatidylserine decarboxylase proenzyme from Bacillus thuringiensis (strain Al Hakam).